The following is a 788-amino-acid chain: Pyridoxal-dependent decarboxylase domain-containing protein 1 (788 aa).

The segment covering 28–40 (EDSQRRTEEENGK) has biased composition (basic and acidic residues). Residues 28–51 (EDSQRRTEEENGKKLISGDIPGPL) form a disordered region. Thr414 is modified (phosphothreonine). The residue at position 652 (Ser652) is a Phosphoserine. The segment at 684–788 (AGVTLPPTPS…SQVEGPESLR (105 aa)) is disordered. Phosphothreonine is present on residues Thr687 and Thr691. Ser710, Ser718, and Ser722 each carry phosphoserine. Residues 725-734 (HIEDLEKVER) are compositionally biased toward basic and acidic residues. Residues 738–750 (GPEQITLEASSTE) are compositionally biased toward polar residues. Ser748, Ser757, Ser779, and Ser786 each carry phosphoserine. Over residues 772 to 788 (PHPEDDHSQVEGPESLR) the composition is skewed to basic and acidic residues.

The protein belongs to the group II decarboxylase family. It depends on pyridoxal 5'-phosphate as a cofactor.

The chain is Pyridoxal-dependent decarboxylase domain-containing protein 1 (PDXDC1) from Homo sapiens (Human).